We begin with the raw amino-acid sequence, 278 residues long: Undecaprenyl-diphosphatase (278 aa).

6 helical membrane-spanning segments follow: residues 44 to 64, 84 to 104, 112 to 132, 187 to 207, 224 to 244, and 254 to 274; these read FLEM…MTIY, WQLW…AVPL, FNFM…FIWI, SVAA…YSGL, VWIL…VIRF, and FTVF…YAFI.

This sequence belongs to the UppP family.

The protein resides in the cell membrane. The catalysed reaction is di-trans,octa-cis-undecaprenyl diphosphate + H2O = di-trans,octa-cis-undecaprenyl phosphate + phosphate + H(+). Catalyzes the dephosphorylation of undecaprenyl diphosphate (UPP). Confers resistance to bacitracin. In Streptococcus suis (strain 98HAH33), this protein is Undecaprenyl-diphosphatase.